The following is a 362-amino-acid chain: Chorismate synthase (362 aa).

Arg47 contributes to the NADP(+) binding site. Residues 124–126 (RSS), Gly286, 301–305 (KPTAT), and Arg327 each bind FMN.

This sequence belongs to the chorismate synthase family. As to quaternary structure, homotetramer. FMNH2 serves as cofactor.

It catalyses the reaction 5-O-(1-carboxyvinyl)-3-phosphoshikimate = chorismate + phosphate. Its pathway is metabolic intermediate biosynthesis; chorismate biosynthesis; chorismate from D-erythrose 4-phosphate and phosphoenolpyruvate: step 7/7. In terms of biological role, catalyzes the anti-1,4-elimination of the C-3 phosphate and the C-6 proR hydrogen from 5-enolpyruvylshikimate-3-phosphate (EPSP) to yield chorismate, which is the branch point compound that serves as the starting substrate for the three terminal pathways of aromatic amino acid biosynthesis. This reaction introduces a second double bond into the aromatic ring system. This is Chorismate synthase from Nostoc punctiforme (strain ATCC 29133 / PCC 73102).